Consider the following 306-residue polypeptide: MGERLLESKKDHQHGEILTQVPDDMLKKKTPRVKSCGEVSVGHASLNRHHRADTGHKPYEYQEYGQKPYKCTYCKKAFSDLPYFRTHEWAHTGGKPYDCEECGKSFISRSSIRRHRIMHSGDGPYKCNFCGKALMCLSLYLIHKRTHTGEKPYECKQCGKAFSHSGSLRIHERTHTGEKPYECSECGKAFHSSTCLHAHKITHTGEKPYECKQCGKAFVSFNSVRYHERTHTGEKPYECKQCGKAFRSASHLRTHGRTHTGEKPYECKQCGKAFGCASSVKIHERTHTGEKPCSSNTSKGQGEKIA.

Residues 31–53 form a C2H2-type 1; degenerate zinc finger; that stretch reads PRVKSCGEVSVGHASLNRHHRAD. 8 consecutive C2H2-type zinc fingers follow at residues 69–91, 97–119, 125–147, 153–175, 181–203, 209–231, 237–259, and 265–287; these read YKCTYCKKAFSDLPYFRTHEWAH, YDCEECGKSFISRSSIRRHRIMH, YKCNFCGKALMCLSLYLIHKRTH, YECKQCGKAFSHSGSLRIHERTH, YECSECGKAFHSSTCLHAHKITH, YECKQCGKAFVSFNSVRYHERTH, YECKQCGKAFRSASHLRTHGRTH, and YECKQCGKAFGCASSVKIHERTH. Y209 carries the post-translational modification Phosphotyrosine. Residues 287–306 form a disordered region; the sequence is HTGEKPCSSNTSKGQGEKIA.

Belongs to the krueppel C2H2-type zinc-finger protein family.

It is found in the nucleus. In terms of biological role, may be involved in transcriptional regulation. In Homo sapiens (Human), this protein is Zinc finger protein 625 (ZNF625).